The following is a 690-amino-acid chain: Iron-regulated transcriptional activator AFT1 (690 aa).

The disordered stretch occupies residues 1-21 (MEGFNPADIEHASPINSSDSH). Residue Asp-110 participates in Zn(2+) binding. Positions 111, 115, 131, 132, 133, 134, 135, and 138 each coordinate DNA. Cys-143 contributes to the Zn(2+) binding site. The segment covering 148–159 (RGRNARRKRKDK) has biased composition (basic residues). A disordered region spans residues 148-205 (RGRNARRKRKDKPKGQDHEDEKSKINDDELEYASPSNATVTNGPQTSPDQTSSIKPKK). A compositionally biased stretch (basic and acidic residues) spans 160-174 (PKGQDHEDEKSKIND). A compositionally biased stretch (polar residues) spans 181–201 (SPSNATVTNGPQTSPDQTSSI). Cys-215 is a binding site for Zn(2+). Lys-226 contributes to the DNA binding site. His-239 and His-241 together coordinate Zn(2+). A DNA-binding site is contributed by Asn-263. The CDC [2Fe-2S] cluster binding motif motif lies at 291–293 (CDC). 2 disordered regions span residues 335-357 (PCLP…PKSQ) and 612-655 (SSNE…VQKD). A compositionally biased stretch (polar residues) spans 339–351 (SVNNTGSINTNNV). Positions 621–638 (HQYGPQQQPPQQLQYHQN) are enriched in low complexity. A compositionally biased stretch (basic and acidic residues) spans 639–649 (QPHDGHNHEQH).

Homodimer. Dimerization decreases the DNA-binding activity.

Its subcellular location is the nucleus. Dimerization via the binding of Fe(2+) or a [2Fe-2S] cluster decreases the DNA-binding activity. Functionally, transcription factor that activates the genes for FRE1, FRE2 and FET3 in response to iron deprivationand thereby plays a central role in iron homeostasis. Also required for the expression of LSO1. Recognizes the consensus iron-responsive element (Fe-RE) sequence 5'-CACCC-3' in the promoters of target genes. Iron could interact directly with AFT1 and inhibits its activity. In high iron condition, the presence of Fe(2+) or [2Fe-2S] cluster leads to dimerization, which in turn leads to a decrease in DNA affinity. The polypeptide is Iron-regulated transcriptional activator AFT1 (Saccharomyces cerevisiae (strain ATCC 204508 / S288c) (Baker's yeast)).